We begin with the raw amino-acid sequence, 566 residues long: Putative ABC transporter ATP-binding protein BCE_2668 (566 aa).

ABC transporter domains are found at residues 5 to 246 (ISFE…GLRE) and 300 to 533 (LKVE…ANLK). ATP contacts are provided by residues 39 to 46 (GRSGSGKS) and 333 to 340 (GHNGAGKS).

Belongs to the ABC transporter superfamily.

The protein localises to the cell membrane. In terms of biological role, probably part of an ABC transporter complex. Responsible for energy coupling to the transport system. The protein is Putative ABC transporter ATP-binding protein BCE_2668 of Bacillus cereus (strain ATCC 10987 / NRS 248).